A 213-amino-acid polypeptide reads, in one-letter code: Protein ras-1 (213 aa).

A GTP-binding site is contributed by 15–22 (GGGGVGKS). Residues 37-45 (YDPTIEDSY) carry the Effector region motif. Residues 62-66 (DTAGQ) and 121-124 (NKYD) each bind GTP. The residue at position 210 (Cys-210) is a Cysteine methyl ester. Cys-210 carries the S-farnesyl cysteine lipid modification. Residues 211–213 (IMM) constitute a propeptide, removed in mature form.

This sequence belongs to the small GTPase superfamily. Ras family.

It is found in the cell membrane. It catalyses the reaction GTP + H2O = GDP + phosphate + H(+). Functionally, ras proteins bind GDP/GTP and possess intrinsic GTPase activity. This chain is Protein ras-1 (ras-1), found in Neurospora crassa (strain ATCC 24698 / 74-OR23-1A / CBS 708.71 / DSM 1257 / FGSC 987).